The following is a 210-amino-acid chain: Urease accessory protein UreG (210 aa).

14-21 (GPVGSGKT) contacts GTP.

The protein belongs to the SIMIBI class G3E GTPase family. UreG subfamily. In terms of assembly, homodimer. UreD, UreF and UreG form a complex that acts as a GTP-hydrolysis-dependent molecular chaperone, activating the urease apoprotein by helping to assemble the nickel containing metallocenter of UreC. The UreE protein probably delivers the nickel.

It localises to the cytoplasm. Functionally, facilitates the functional incorporation of the urease nickel metallocenter. This process requires GTP hydrolysis, probably effectuated by UreG. In Rhodopseudomonas palustris (strain BisB5), this protein is Urease accessory protein UreG.